Here is a 400-residue protein sequence, read N- to C-terminus: Renin (400 aa).

Positions 1–17 are cleaved as a signal peptide; the sequence is MPLWGLLLALWGCSTFS. Residues 18-59 constitute a propeptide, activation peptide; sequence LPADTAAFRRIFLKKMPSVRESLKERGVDMAQLGAEWSQLTK. An N-linked (GlcNAc...) asparagine glycan is attached at Asn65. Positions 80–397 constitute a Peptidase A1 domain; sequence YYGEIGIGTP…DRRNNRIGFA (318 aa). Residue Asp98 is part of the active site. A disulfide bridge connects residues Cys111 and Cys118. N-linked (GlcNAc...) asparagine glycosylation is present at Asn135. Residues Cys277 and Cys281 are joined by a disulfide bond. Asp286 is a catalytic residue. An intrachain disulfide couples Cys320 to Cys356. N-linked (GlcNAc...) asparagine glycosylation occurs at Asn353.

This sequence belongs to the peptidase A1 family. Interacts with ATP6AP2. As to expression, kidney.

Its subcellular location is the secreted. The protein localises to the membrane. It catalyses the reaction Cleavage of Leu-|-Xaa bond in angiotensinogen to generate angiotensin I.. Its activity is regulated as follows. Interaction with ATP6AP2 results in a 5-fold increased efficiency in angiotensinogen processing. Renin is a highly specific endopeptidase, whose only known function is to generate angiotensin I from angiotensinogen in the plasma, initiating a cascade of reactions that produce an elevation of blood pressure and increased sodium retention by the kidney. This chain is Renin (REN), found in Ovis aries (Sheep).